The following is a 496-amino-acid chain: Neuronal acetylcholine receptor subunit beta-4 (496 aa).

Residues Met-1–Gly-19 form the signal peptide. Over Asp-20–Thr-236 the chain is Extracellular. N-linked (GlcNAc...) asparagine glycosylation is found at Asn-36, Asn-93, Asn-138, and Asn-166. A disulfide bridge connects residues Cys-153 and Cys-167. The chain crosses the membrane as a helical span at residues Ile-237 to Pro-257. The Cytoplasmic portion of the chain corresponds to Ser-258–Thr-265. Residue Glu-262 coordinates Na(+). A helical transmembrane segment spans residues Leu-266–Pro-286. The Extracellular portion of the chain corresponds to Pro-287 to Tyr-298. Residues Leu-299–Val-319 form a helical membrane-spanning segment. The Cytoplasmic segment spans residues His-320–Arg-464. The chain crosses the membrane as a helical span at residues Leu-465–Pro-485. Topologically, residues Leu-486–Pro-496 are extracellular.

The protein belongs to the ligand-gated ion channel (TC 1.A.9) family. Acetylcholine receptor (TC 1.A.9.1) subfamily. Beta-4/CHRNB4 sub-subfamily. As to quaternary structure, neuronal AChR is composed of two different types of subunits: alpha and beta. CHRNB4/Beta-4 subunit can be combined to CHRNA2/alpha-2, CHRNA3/alpha-3 or CHRNA4/alpha-4, CHRNA5/alpha-5 and CHRNB3/beta-3 to give rise to functional receptors. Forms stoichiometries such as (CHRNA3)2:(CHRNB4)3 or (CHRNA3:CHRNB4)2:CHRNB3. Interacts with RIC3; which is required for proper folding and assembly. Interacts with LYPD6.

The protein resides in the synaptic cell membrane. Its subcellular location is the cell membrane. The catalysed reaction is Ca(2+)(in) = Ca(2+)(out). It catalyses the reaction K(+)(in) = K(+)(out). The enzyme catalyses Na(+)(in) = Na(+)(out). Component of neuronal acetylcholine receptors (nAChRs) that function as pentameric, ligand-gated cation channels with high calcium permeability among other activities. nAChRs are excitatory neurotrasnmitter receptors formed by a collection of nAChR subunits known to mediate synaptic transmission in the nervous system and the neuromuscular junction. Each nAchR subunit confers differential attributes to channel properties, including activation, deactivation and desensitization kinetics, pH sensitivity, cation permeability, and binding to allosteric modulators. CHRNB4 forms heteropentameric neuronal acetylcholine receptors with CHRNA2, CHRNA3 and CHRNA4, as well as CHRNA5 and CHRNB3 as accesory subunits. CHRNA3:CHRNB4 being predominant in neurons of the autonomic ganglia, it is known as ganglionic nicotinic receptor. CHRNA3:CHRNB4 or CHRNA3:CHRNA5:CHRNB4 play also an important role in the habenulo-interpeduncular tract, modulating the mesolimbic dopamine system and affecting reward circuits and addiction. Hypothalamic CHRNA3:CHRNB4 nAChR activation by nicotine leads to activation of POMC neurons and a decrease in food intake. The polypeptide is Neuronal acetylcholine receptor subunit beta-4 (CHRNB4) (Bos taurus (Bovine)).